Reading from the N-terminus, the 74-residue chain is U3-agatoxin-Ao1d (74 aa).

An N-terminal signal peptide occupies residues 1-20; the sequence is MKAAISLLLLSALLFVVIEA. Residues 21 to 34 constitute a propeptide that is removed on maturation; the sequence is ITYEEGKELFQGER. 4 disulfide bridges follow: cysteine 37–cysteine 53, cysteine 44–cysteine 58, cysteine 52–cysteine 68, and cysteine 60–cysteine 66. Serine 72 bears the Serine amide mark.

This sequence belongs to the neurotoxin 07 (Beta/delta-agtx) family. 02 (aga-3) subfamily. As to expression, expressed by the venom gland.

It is found in the secreted. In terms of biological role, insecticidal neurotoxin that induces an irreversible spastic paralysis when injected into insects. Modifies presynaptic voltage-gated sodium channels (Nav), causing them to open at the normal resting potential of the nerve. This leads to spontaneous release of neurotransmitter and repetitive action potentials in motor neurons. This Agelena orientalis (Funnel-web spider) protein is U3-agatoxin-Ao1d.